A 295-amino-acid chain; its full sequence is Probable protein phosphatase 2C 6 (295 aa).

The PPM-type phosphatase domain maps to 23 to 294 (QYAATHMQGW…DNMTCILIQF (272 aa)). Mn(2+) is bound by residues Asp57, Gly58, Asp237, and Asp285.

It belongs to the PP2C family. Requires Mg(2+) as cofactor. Mn(2+) serves as cofactor.

It is found in the membrane. The catalysed reaction is O-phospho-L-seryl-[protein] + H2O = L-seryl-[protein] + phosphate. The enzyme catalyses O-phospho-L-threonyl-[protein] + H2O = L-threonyl-[protein] + phosphate. In terms of biological role, enzyme with a broad specificity. This chain is Probable protein phosphatase 2C 6, found in Paramecium tetraurelia.